Reading from the N-terminus, the 235-residue chain is RNA polymerase sigma factor SigI7 (235 aa).

The short motif at D49–I62 is the Polymerase core binding element. The segment at residues V191 to K210 is a DNA-binding region (H-T-H motif).

This sequence belongs to the sigma-70 factor family. SigI subfamily. As to quaternary structure, interacts with RsgI7.

It localises to the cytoplasm. Negatively regulated by the anti-sigma-I factor RsgI7. Its function is as follows. Sigma factors are initiation factors that promote the attachment of RNA polymerase to specific initiation sites and are then released. This is RNA polymerase sigma factor SigI7 from Acetivibrio thermocellus (strain ATCC 27405 / DSM 1237 / JCM 9322 / NBRC 103400 / NCIMB 10682 / NRRL B-4536 / VPI 7372) (Clostridium thermocellum).